Reading from the N-terminus, the 79-residue chain is ATP synthase subunit c (79 aa).

The next 2 membrane-spanning stretches (helical) occupy residues 11-31 (MAAAVMMGLAAIGAAIGIGIL) and 53-73 (FFIVMGLVDAIPMIAVGLGLY).

Belongs to the ATPase C chain family. As to quaternary structure, F-type ATPases have 2 components, F(1) - the catalytic core - and F(0) - the membrane proton channel. F(1) has five subunits: alpha(3), beta(3), gamma(1), delta(1), epsilon(1). F(0) has three main subunits: a(1), b(2) and c(10-14). The alpha and beta chains form an alternating ring which encloses part of the gamma chain. F(1) is attached to F(0) by a central stalk formed by the gamma and epsilon chains, while a peripheral stalk is formed by the delta and b chains.

The protein resides in the cell inner membrane. F(1)F(0) ATP synthase produces ATP from ADP in the presence of a proton or sodium gradient. F-type ATPases consist of two structural domains, F(1) containing the extramembraneous catalytic core and F(0) containing the membrane proton channel, linked together by a central stalk and a peripheral stalk. During catalysis, ATP synthesis in the catalytic domain of F(1) is coupled via a rotary mechanism of the central stalk subunits to proton translocation. Its function is as follows. Key component of the F(0) channel; it plays a direct role in translocation across the membrane. A homomeric c-ring of between 10-14 subunits forms the central stalk rotor element with the F(1) delta and epsilon subunits. The chain is ATP synthase subunit c from Citrobacter koseri (strain ATCC BAA-895 / CDC 4225-83 / SGSC4696).